A 456-amino-acid polypeptide reads, in one-letter code: Glycerol-3-phosphate acyltransferase 4 (456 aa).

The N-terminal stretch at 1-37 (MFLLLPFDSLIVNLLGISLTVLFTLLLVFIIVPAIFG) is a signal peptide. Helical transmembrane passes span 156-176 (ISLRLTVLWGLGVLIRYCFLL) and 180-200 (IALAFTGISLLVVGTTVVGYL). Asn247 carries N-linked (GlcNAc...) asparagine glycosylation. An HXXXXD motif motif is present at residues 248–253 (HTSPID). N-linked (GlcNAc...) asparagine glycans are attached at residues Asn327, Asn328, and Asn362.

It belongs to the 1-acyl-sn-glycerol-3-phosphate acyltransferase family.

It is found in the endoplasmic reticulum membrane. The catalysed reaction is sn-glycerol 3-phosphate + an acyl-CoA = a 1-acyl-sn-glycero-3-phosphate + CoA. It carries out the reaction dodecanoyl-CoA + sn-glycerol 3-phosphate = 1-dodecanoyl-sn-glycerol 3-phosphate + CoA. The enzyme catalyses sn-glycerol 3-phosphate + hexadecanoyl-CoA = 1-hexadecanoyl-sn-glycero-3-phosphate + CoA. It catalyses the reaction sn-glycerol 3-phosphate + octadecanoyl-CoA = 1-octadecanoyl-sn-glycero-3-phosphate + CoA. The catalysed reaction is sn-glycerol 3-phosphate + (9Z)-octadecenoyl-CoA = 1-(9Z-octadecenoyl)-sn-glycero-3-phosphate + CoA. It carries out the reaction (9Z,12Z)-octadecadienoyl-CoA + sn-glycerol 3-phosphate = 1-(9Z,12Z)-octadecadienoyl-sn-glycero-3-phosphate + CoA. It participates in phospholipid metabolism; CDP-diacylglycerol biosynthesis; CDP-diacylglycerol from sn-glycerol 3-phosphate: step 1/3. Functionally, converts glycerol-3-phosphate to 1-acyl-sn-glycerol-3-phosphate (lysophosphatidic acid or LPA) by incorporating an acyl moiety at the sn-1 position of the glycerol backbone. Active against both saturated and unsaturated long-chain fatty acyl-CoAs. Protects cells against lipotoxicity. The sequence is that of Glycerol-3-phosphate acyltransferase 4 from Pongo abelii (Sumatran orangutan).